The sequence spans 93 residues: Histone H2B (93 aa).

Residues 1–12 (MPEPAKSAPAPK) are compositionally biased toward low complexity. The interval 1–31 (MPEPAKSAPAPKKGSKKAVTKTQKKGDKKRX) is disordered. N6-acetyllysine occurs at positions 6 and 13. Residues 13–28 (KGSKKAVTKTQKKGDK) show a composition bias toward basic residues. Ser-15 is subject to Phosphoserine. N6-acetyllysine is present on residues Lys-16 and Lys-21.

The protein belongs to the histone H2B family. The nucleosome is a histone octamer containing two molecules each of H2A, H2B, H3 and H4 assembled in one H3-H4 heterotetramer and two H2A-H2B heterodimers. The octamer wraps approximately 147 bp of DNA. In terms of processing, monoubiquitination at the C-terminal Lys gives a specific tag for epigenetic transcriptional activation and is also prerequisite for histone H3 'Lys-4' and 'Lys-79' methylation. Phosphorylated on Ser-15 during apoptosis; which facilitates apoptotic chromatin condensation.

It is found in the nucleus. The protein resides in the chromosome. In terms of biological role, core component of nucleosome. Nucleosomes wrap and compact DNA into chromatin, limiting DNA accessibility to the cellular machineries which require DNA as a template. Histones thereby play a central role in transcription regulation, DNA repair, DNA replication and chromosomal stability. DNA accessibility is regulated via a complex set of post-translational modifications of histones, also called histone code, and nucleosome remodeling. This is Histone H2B from Crocodylus niloticus (Nile crocodile).